Here is a 327-residue protein sequence, read N- to C-terminus: Zinc transport protein ZntB (327 aa).

The Cytoplasmic segment spans residues 1-273 (MEAIKGADVN…ARRTYTMSLM (273 aa)). Residues 274-294 (AMVFLPSTFLTGLFGVNLGGI) form a helical membrane-spanning segment. The Periplasmic portion of the chain corresponds to 295 to 300 (PGGGWR). The chain crosses the membrane as a helical span at residues 301–321 (FGFSLFCILLVVLIGGVALWL). Topologically, residues 322–327 (HRSKWL) are cytoplasmic.

It belongs to the CorA metal ion transporter (MIT) (TC 1.A.35) family.

Its subcellular location is the cell inner membrane. The enzyme catalyses Zn(2+)(out) + H(+)(out) = Zn(2+)(in) + H(+)(in). In terms of biological role, zinc transporter. Acts as a Zn(2+):proton symporter, which likely mediates zinc ion uptake. The sequence is that of Zinc transport protein ZntB from Escherichia fergusonii (strain ATCC 35469 / DSM 13698 / CCUG 18766 / IAM 14443 / JCM 21226 / LMG 7866 / NBRC 102419 / NCTC 12128 / CDC 0568-73).